A 789-amino-acid polypeptide reads, in one-letter code: Trans-4-hydroxy-L-proline dehydratase (789 aa).

The 657-residue stretch at 7–663 folds into the PFL domain; that stretch reads ERTKKLREES…IMGASPNGRL (657 aa). The Cysteine radical intermediate role is filled by Cys-434. The active-site Proton acceptor is Glu-436. The Glycine radical domain occupies 670-789; it reads EGISPEKGGD…EIIGRTEQTF (120 aa). Glycine radical is present on Gly-765.

Belongs to the glycyl radical enzyme (GRE) family. HYPD subfamily. Requires the activating protein PflE to generate the key active site glycyl radical on Gly-765 that is involved in catalysis.

The catalysed reaction is trans-4-hydroxy-L-proline = (S)-1-pyrroline-5-carboxylate + H2O + H(+). Functionally, glycine radical enzyme that catalyzes the dehydration of the non-proteinogenic amino acid trans-4-hydroxy-L-proline (Hyp) to produce delta(1)-pyrroline-5-carboxylate (P5C). Is involved in the anaerobic degradation of 4-hydroxyproline. The protein is Trans-4-hydroxy-L-proline dehydratase of Clostridioides difficile (Peptoclostridium difficile).